The chain runs to 457 residues: ATP synthase subunit beta (457 aa).

ATP is bound at residue 147-154 (GGAGVGKT).

Belongs to the ATPase alpha/beta chains family. In terms of assembly, F-type ATPases have 2 components, CF(1) - the catalytic core - and CF(0) - the membrane proton channel. CF(1) has five subunits: alpha(3), beta(3), gamma(1), delta(1), epsilon(1). CF(0) has three main subunits: a(1), b(2) and c(9-12). The alpha and beta chains form an alternating ring which encloses part of the gamma chain. CF(1) is attached to CF(0) by a central stalk formed by the gamma and epsilon chains, while a peripheral stalk is formed by the delta and b chains.

Its subcellular location is the cell inner membrane. It carries out the reaction ATP + H2O + 4 H(+)(in) = ADP + phosphate + 5 H(+)(out). In terms of biological role, produces ATP from ADP in the presence of a proton gradient across the membrane. The catalytic sites are hosted primarily by the beta subunits. The polypeptide is ATP synthase subunit beta (Haemophilus influenzae (strain 86-028NP)).